A 620-amino-acid polypeptide reads, in one-letter code: Chaperone protein HscA homolog (620 aa).

Belongs to the heat shock protein 70 family.

In terms of biological role, chaperone involved in the maturation of iron-sulfur cluster-containing proteins. Has a low intrinsic ATPase activity which is markedly stimulated by HscB. The chain is Chaperone protein HscA homolog from Pseudomonas fluorescens (strain SBW25).